A 98-amino-acid polypeptide reads, in one-letter code: Large ribosomal subunit protein uL23 (98 aa).

It belongs to the universal ribosomal protein uL23 family. As to quaternary structure, part of the 50S ribosomal subunit. Contacts protein L29, and trigger factor when it is bound to the ribosome.

One of the early assembly proteins it binds 23S rRNA. One of the proteins that surrounds the polypeptide exit tunnel on the outside of the ribosome. Forms the main docking site for trigger factor binding to the ribosome. In Clostridium botulinum (strain Eklund 17B / Type B), this protein is Large ribosomal subunit protein uL23.